A 380-amino-acid polypeptide reads, in one-letter code: Homoserine O-acetyltransferase (380 aa).

The region spanning 59-363 (NVVMVLHALT…IYGHDGFLVE (305 aa)) is the AB hydrolase-1 domain. The active-site Nucleophile is the serine 164. Residue arginine 234 participates in substrate binding. Active-site residues include aspartate 327 and histidine 357. Residue aspartate 358 participates in substrate binding.

The protein belongs to the AB hydrolase superfamily. MetX family. In terms of assembly, homodimer.

Its subcellular location is the cytoplasm. The catalysed reaction is L-homoserine + acetyl-CoA = O-acetyl-L-homoserine + CoA. The protein operates within amino-acid biosynthesis; L-methionine biosynthesis via de novo pathway; O-acetyl-L-homoserine from L-homoserine: step 1/1. Transfers an acetyl group from acetyl-CoA to L-homoserine, forming acetyl-L-homoserine. The sequence is that of Homoserine O-acetyltransferase from Mycolicibacterium smegmatis (strain ATCC 700084 / mc(2)155) (Mycobacterium smegmatis).